The primary structure comprises 156 residues: uncharacterized protein (156 aa).

The first 18 residues, 1–18 (MKKLLSIFLMAFSLNAFA), serve as a signal peptide directing secretion. Residues 19-156 (QTNLADVQLK…AEQIRVFAEK (138 aa)) form the Thioredoxin domain. An intrachain disulfide couples C54 to C57.

The protein belongs to the thioredoxin family.

This is an uncharacterized protein from Haemophilus influenzae (strain ATCC 51907 / DSM 11121 / KW20 / Rd).